The following is a 164-amino-acid chain: MAQMDYTRAAKYFLLFDFFAGFKLGLKYFFKPKATLAYPHEKGPLSPRFRGEHALRRYPNGEERCIACKLCEAICPAQAITIDAEPRDDGSRRTTRYDIDMTKCIYCGFCQEACPVDAIVEGPNFEFATETREELFYDKEKLLDNGERWEAEIARNLELDAPYR.

2 consecutive 4Fe-4S ferredoxin-type domains span residues 55 to 85 (LRRY…IDAE) and 95 to 124 (TRYD…EGPN). [4Fe-4S] cluster contacts are provided by C65, C68, C71, C75, C104, C107, C110, and C114.

This sequence belongs to the complex I 23 kDa subunit family. In terms of assembly, NDH-1 is composed of 14 different subunits. Subunits NuoA, H, J, K, L, M, N constitute the membrane sector of the complex. [4Fe-4S] cluster serves as cofactor.

Its subcellular location is the cell inner membrane. The enzyme catalyses a quinone + NADH + 5 H(+)(in) = a quinol + NAD(+) + 4 H(+)(out). In terms of biological role, NDH-1 shuttles electrons from NADH, via FMN and iron-sulfur (Fe-S) centers, to quinones in the respiratory chain. The immediate electron acceptor for the enzyme in this species is believed to be ubiquinone. Couples the redox reaction to proton translocation (for every two electrons transferred, four hydrogen ions are translocated across the cytoplasmic membrane), and thus conserves the redox energy in a proton gradient. In Dinoroseobacter shibae (strain DSM 16493 / NCIMB 14021 / DFL 12), this protein is NADH-quinone oxidoreductase subunit I.